We begin with the raw amino-acid sequence, 102 residues long: NADH-quinone oxidoreductase subunit K (102 aa).

3 helical membrane-spanning segments follow: residues 6–26 (LEHG…GLMV), 30–50 (ILFV…AFIV), and 62–82 (VMFI…LAIL).

Belongs to the complex I subunit 4L family. As to quaternary structure, NDH-1 is composed of 13 different subunits. Subunits NuoA, H, J, K, L, M, N constitute the membrane sector of the complex.

The protein resides in the cell inner membrane. The catalysed reaction is a quinone + NADH + 5 H(+)(in) = a quinol + NAD(+) + 4 H(+)(out). Its function is as follows. NDH-1 shuttles electrons from NADH, via FMN and iron-sulfur (Fe-S) centers, to quinones in the respiratory chain. The immediate electron acceptor for the enzyme in this species is believed to be ubiquinone. Couples the redox reaction to proton translocation (for every two electrons transferred, four hydrogen ions are translocated across the cytoplasmic membrane), and thus conserves the redox energy in a proton gradient. This is NADH-quinone oxidoreductase subunit K from Pseudomonas fluorescens (strain SBW25).